The following is a 772-amino-acid chain: Carnitine O-palmitoyltransferase 1, muscle isoform (772 aa).

The Cytoplasmic segment spans residues 1 to 47 (MAEAHQAVAFQFTVTPEGVDFRLSREALKHIYLSGINSWKKRLIRIK). A helical transmembrane segment spans residues 48–73 (NGILRGVYPGSPTSWLVVASATAGSS). The Mitochondrial intermembrane portion of the chain corresponds to 74-102 (YYNVDISMGLVNHIQRCLPERYGPYWTPQ). Residues 103–122 (TRALLSMAVVSTGVWMIGIF) form a helical membrane-spanning segment. The Cytoplasmic segment spans residues 123-772 (FFRQTLKLLL…DLFQVPKTDS (650 aa)). Residue histidine 473 is the Proton acceptor of the active site. 555–567 (GKGLIKKCRTSPD) is a CoA binding site. (R)-carnitine-binding residues include tyrosine 589 and threonine 602.

The protein belongs to the carnitine/choline acetyltransferase family.

It localises to the mitochondrion outer membrane. The catalysed reaction is (R)-carnitine + hexadecanoyl-CoA = O-hexadecanoyl-(R)-carnitine + CoA. Its pathway is lipid metabolism; fatty acid beta-oxidation. Its function is as follows. Catalyzes the transfer of the acyl group of long-chain fatty acid-CoA conjugates onto carnitine, an essential step for the mitochondrial uptake of long-chain fatty acids and their subsequent beta-oxidation in the mitochondrion. This is Carnitine O-palmitoyltransferase 1, muscle isoform (CPT1B) from Sus scrofa (Pig).